A 219-amino-acid polypeptide reads, in one-letter code: Proteasome subunit beta type-9 (219 aa).

The propeptide at Met1 to Gly20 is removed in mature form. Thr21 (nucleophile) is an active-site residue. An N6-acetyllysine mark is found at Lys53 and Lys109.

This sequence belongs to the peptidase T1B family. In terms of assembly, the 26S proteasome consists of a 20S proteasome core and two 19S regulatory subunits. The 20S proteasome core is composed of 28 subunits that are arranged in four stacked rings, resulting in a barrel-shaped structure. The two end rings are each formed by seven alpha subunits, and the two central rings are each formed by seven beta subunits. The catalytic chamber with the active sites is on the inside of the barrel. Component of the immunoproteasome, where it displaces the equivalent housekeeping subunit PSMB6. Component of the spermatoproteasome, a form of the proteasome specifically found in testis. In terms of processing, autocleaved. The resulting N-terminal Thr residue of the mature subunit is responsible for the nucleophile proteolytic activity.

It is found in the cytoplasm. The protein localises to the nucleus. The enzyme catalyses Cleavage of peptide bonds with very broad specificity.. In terms of biological role, the proteasome is a multicatalytic proteinase complex which is characterized by its ability to cleave peptides with Arg, Phe, Tyr, Leu, and Glu adjacent to the leaving group at neutral or slightly basic pH. The proteasome has an ATP-dependent proteolytic activity. This subunit is involved in antigen processing to generate class I binding peptides. This chain is Proteasome subunit beta type-9 (Psmb9), found in Mus platythrix (Flat-haired mouse).